A 120-amino-acid chain; its full sequence is Putative monooxygenase GME11364 (120 aa).

The region spanning 9-99 (VSVHIRLTVD…ILLKPHEVEL (91 aa)) is the ABM domain.

Belongs to the LsrG family.

It functions in the pathway secondary metabolite biosynthesis. Its function is as follows. Putative monooxygenase; part of the gene cluster that mediates the biosynthesis of dibenzodioxocinones such as pestalotiollide B, a novel class of inhibitors against cholesterol ester transfer protein (CEPT). The biosynthesis initiates from condensation of acetate and malonate units catalyzed by the non-reducing PKS pks8/GME11356. Pks8/GME11356 lacks a thioesterase (TE) domain, which is important to the cyclizing of the third ring of atrochrysone carboxylic acid, and the esterase GME11355 might play the role of TE and catalyzes the cyclization reaction of the C ring. The lactamase-like protein GME11357 (or other beta-lactamases in Pestalotiopsis microspora) probably hydrolyzes the thioester bond between the ACP of pks8/GME11356 and the intermediate to release atrochrysone carboxylic acid, which is spontaneously dehydrates to form endocrocin anthrone. Endocrocin anthrone is further converted to emodin via the endocrocin intermediate. Emodin is then oxidized by several enzymes such as the Baeyer-Villiger oxidase GME11358, the oxidoreductase GME11367, the short chain dehydrogenase/reductase GME11373, as well as by other oxidoreductases from the cluster, to modify the A and C rings and open the B ring, and finally yield monodictyphenone. The prenyltransferase GME11375 may catalyze the addition reaction between the C5 side chains and the carbon bone of dibenzodioxocinones. The remaining biochemical reactions to the final product dibenzodioxocinones should be methylation catalyzed by methyltransferase GME11366 and reduction and lactonization reaction catalyzed by a series of oxidordeuctases. This Pestalotiopsis microspora protein is Putative monooxygenase GME11364.